We begin with the raw amino-acid sequence, 200 residues long: Recombination protein RecR (200 aa).

The C4-type zinc finger occupies 59–74 (CEKCNTFTEAQICEVC). The Toprim domain occupies 82 to 177 (ALLCVVETPA…AVTRLARGVP (96 aa)).

The protein belongs to the RecR family.

In terms of biological role, may play a role in DNA repair. It seems to be involved in an RecBC-independent recombinational process of DNA repair. It may act with RecF and RecO. The protein is Recombination protein RecR of Burkholderia mallei (strain NCTC 10247).